The following is a 350-amino-acid chain: uncharacterized protein (350 aa).

Residues 330–350 (RHPGDLRSEPHYRPSAKLAEF) are disordered. A compositionally biased stretch (basic and acidic residues) spans 331 to 341 (HPGDLRSEPHY).

This is an uncharacterized protein from Mycobacterium tuberculosis.